The sequence spans 926 residues: Ubiquitin carboxyl-terminal hydrolase 4 (926 aa).

Residues serine 205–valine 328 form the Rhodanese domain. A Phosphoserine modification is found at serine 443. A USP domain is found at valine 562 to valine 923. Cysteine 571 acts as the Nucleophile in catalysis. The active-site Proton acceptor is histidine 880.

This sequence belongs to the peptidase C19 family. In terms of assembly, interacts with BRO1, RFU1 and VPS32. Associates with the 26S proteasome.

It localises to the cytoplasm. It is found in the late endosome membrane. The enzyme catalyses Thiol-dependent hydrolysis of ester, thioester, amide, peptide and isopeptide bonds formed by the C-terminal Gly of ubiquitin (a 76-residue protein attached to proteins as an intracellular targeting signal).. RFU1 is an inhibitor of deubiquitination activity. Functionally, ubiquitin thioesterase that acts at the late endosome/prevacuolar compartment to recover ubiquitin from ubiquitinated membrane proteins en route to the vacuole. Also removes ubiquitin from soluble proteins targeted to proteasomes. Is essential to maintain a normal level of free ubiquitin. Involved in the ammonium-induced down-regulation of the GAP1 permease and the UME3 destruction in response to oxidative stress. Has a role in the RAD9 checkpoint response to TOP1 poisons. Required for promoting coordination of DNA replication and avoids DNA overreplication. The sequence is that of Ubiquitin carboxyl-terminal hydrolase 4 (DOA4) from Saccharomyces cerevisiae (strain YJM789) (Baker's yeast).